The sequence spans 318 residues: Olfactory receptor 10H1 (318 aa).

The Extracellular portion of the chain corresponds to 1-25 (MQRANHSTVTQFILVGFSVFPHLQL). Asn5 carries an N-linked (GlcNAc...) asparagine glycan. The helical transmembrane segment at 26–46 (MLFLLFLLMYLFTLLGNLLIM) threads the bilayer. At 47 to 54 (ATVWSERS) the chain is on the cytoplasmic side. The chain crosses the membrane as a helical span at residues 55-75 (LHTPMYLFLCALSVSEILYTV). Residues 76–99 (AIIPRMLADLLSTQRSIAFLACAS) are Extracellular-facing. Cys97 and Cys189 form a disulfide bridge. Residues 100-120 (QMFFSFSFGFTHSFLLTVMGY) traverse the membrane as a helical segment. At 121 to 139 (DRYVAICHPLRYNVLMSPR) the chain is on the cytoplasmic side. The chain crosses the membrane as a helical span at residues 140-160 (GCACLVGCSWAGGLVMGMVVT). Topologically, residues 161–197 (SAIFHLAFCGHKEIHHFACHVPPLLKLACGDDVLVVA) are extracellular. The helical transmembrane segment at 198–218 (KGVGLVCITALLGCFLLILLS) threads the bilayer. At 219-238 (YAFIVAAILKIPSAEGRNKA) the chain is on the cytoplasmic side. A helical membrane pass occupies residues 239–259 (FSTCASHLTVVVVHYGFASVI). The Extracellular segment spans residues 260–272 (YLKPKSPQSLEGD). Residues 273-293 (TLMGITYTVLTPFLSPIIFSL) traverse the membrane as a helical segment. Over 294–318 (RNKELKVAMKKTFFSKLYPEKNVMM) the chain is Cytoplasmic.

It belongs to the G-protein coupled receptor 1 family.

The protein localises to the cell membrane. Its function is as follows. Odorant receptor. The sequence is that of Olfactory receptor 10H1 (OR10H1) from Homo sapiens (Human).